The chain runs to 197 residues: Imidazoleglycerol-phosphate dehydratase (197 aa).

The protein belongs to the imidazoleglycerol-phosphate dehydratase family.

Its subcellular location is the cytoplasm. It carries out the reaction D-erythro-1-(imidazol-4-yl)glycerol 3-phosphate = 3-(imidazol-4-yl)-2-oxopropyl phosphate + H2O. It functions in the pathway amino-acid biosynthesis; L-histidine biosynthesis; L-histidine from 5-phospho-alpha-D-ribose 1-diphosphate: step 6/9. The polypeptide is Imidazoleglycerol-phosphate dehydratase (Rhodopseudomonas palustris (strain BisB5)).